Reading from the N-terminus, the 191-residue chain is Octanoyltransferase (191 aa).

Residues 10–185 (ENSHDEIWLV…NILALLNNPP (176 aa)) form the BPL/LPL catalytic domain. Substrate contacts are provided by residues 49–56 (RGGQVTYH), 116–118 (SLG), and 129–131 (GLA). The Acyl-thioester intermediate role is filled by C147.

This sequence belongs to the LipB family.

The protein resides in the cytoplasm. It catalyses the reaction octanoyl-[ACP] + L-lysyl-[protein] = N(6)-octanoyl-L-lysyl-[protein] + holo-[ACP] + H(+). Its pathway is protein modification; protein lipoylation via endogenous pathway; protein N(6)-(lipoyl)lysine from octanoyl-[acyl-carrier-protein]: step 1/2. Functionally, catalyzes the transfer of endogenously produced octanoic acid from octanoyl-acyl-carrier-protein onto the lipoyl domains of lipoate-dependent enzymes. Lipoyl-ACP can also act as a substrate although octanoyl-ACP is likely to be the physiological substrate. This is Octanoyltransferase from Salmonella choleraesuis (strain SC-B67).